The chain runs to 273 residues: CUE domain-containing protein 2-A (273 aa).

The disordered stretch occupies residues glycine 92–glutamate 121. Residues aspartate 135–valine 178 enclose the CUE domain.

It belongs to the CUEDC2 family. Phosphorylated.

It is found in the cytoplasm. The protein resides in the nucleus. Its function is as follows. May play a role in targeting proteins for ubiquitination and subsequent proteasomal degradation. This chain is CUE domain-containing protein 2-A (cuedc2-a), found in Xenopus laevis (African clawed frog).